The following is a 263-amino-acid chain: S-adenosylmethionine decarboxylase proenzyme (263 aa).

The active-site Schiff-base intermediate with substrate; via pyruvic acid is Ser-113. Ser-113 carries the pyruvic acid (Ser); by autocatalysis modification. His-118 (proton acceptor; for processing activity) is an active-site residue. Residue Cys-141 is the Proton donor; for catalytic activity of the active site.

Belongs to the prokaryotic AdoMetDC family. Type 2 subfamily. As to quaternary structure, heterooctamer of four alpha and four beta chains arranged as a tetramer of alpha/beta heterodimers. It depends on pyruvate as a cofactor. In terms of processing, is synthesized initially as an inactive proenzyme. Formation of the active enzyme involves a self-maturation process in which the active site pyruvoyl group is generated from an internal serine residue via an autocatalytic post-translational modification. Two non-identical subunits are generated from the proenzyme in this reaction, and the pyruvate is formed at the N-terminus of the alpha chain, which is derived from the carboxyl end of the proenzyme. The post-translation cleavage follows an unusual pathway, termed non-hydrolytic serinolysis, in which the side chain hydroxyl group of the serine supplies its oxygen atom to form the C-terminus of the beta chain, while the remainder of the serine residue undergoes an oxidative deamination to produce ammonia and the pyruvoyl group blocking the N-terminus of the alpha chain.

The catalysed reaction is S-adenosyl-L-methionine + H(+) = S-adenosyl 3-(methylsulfanyl)propylamine + CO2. It functions in the pathway amine and polyamine biosynthesis; S-adenosylmethioninamine biosynthesis; S-adenosylmethioninamine from S-adenosyl-L-methionine: step 1/1. In terms of biological role, catalyzes the decarboxylation of S-adenosylmethionine to S-adenosylmethioninamine (dcAdoMet), the propylamine donor required for the synthesis of the polyamines spermine and spermidine from the diamine putrescine. The chain is S-adenosylmethionine decarboxylase proenzyme from Marinobacter nauticus (strain ATCC 700491 / DSM 11845 / VT8) (Marinobacter aquaeolei).